Consider the following 81-residue polypeptide: Cytochrome b559 subunit alpha (81 aa).

The chain crosses the membrane as a helical span at residues 21 to 35 (VIHSITIPALFIAGW). His23 lines the heme pocket.

It belongs to the PsbE/PsbF family. Heterodimer of an alpha subunit and a beta subunit. PSII is composed of 1 copy each of membrane proteins PsbA, PsbB, PsbC, PsbD, PsbE, PsbF, PsbH, PsbI, PsbJ, PsbK, PsbL, PsbM, PsbT, PsbX, PsbY, PsbZ, Psb30/Ycf12, at least 3 peripheral proteins of the oxygen-evolving complex and a large number of cofactors. It forms dimeric complexes. Heme b is required as a cofactor.

It localises to the plastid. The protein resides in the chloroplast thylakoid membrane. Its function is as follows. This b-type cytochrome is tightly associated with the reaction center of photosystem II (PSII). PSII is a light-driven water:plastoquinone oxidoreductase that uses light energy to abstract electrons from H(2)O, generating O(2) and a proton gradient subsequently used for ATP formation. It consists of a core antenna complex that captures photons, and an electron transfer chain that converts photonic excitation into a charge separation. The sequence is that of Cytochrome b559 subunit alpha from Tetradesmus obliquus (Green alga).